Reading from the N-terminus, the 152-residue chain is Large ribosomal subunit protein bL9 (152 aa).

It belongs to the bacterial ribosomal protein bL9 family.

Its function is as follows. Binds to the 23S rRNA. The sequence is that of Large ribosomal subunit protein bL9 from Nocardia farcinica (strain IFM 10152).